The following is a 336-amino-acid chain: Glucokinase (336 aa).

ATP is bound at residue 12–17; that stretch reads ADIGGT.

Belongs to the bacterial glucokinase family.

The protein resides in the cytoplasm. It carries out the reaction D-glucose + ATP = D-glucose 6-phosphate + ADP + H(+). This chain is Glucokinase, found in Helicobacter pylori (strain P12).